A 100-amino-acid polypeptide reads, in one-letter code: RNA-binding protein YlxQ (100 aa).

It belongs to the eukaryotic ribosomal protein eL8 family.

Its function is as follows. RNA-binding protein that recognizes the K-turn motif present in ribosomal RNA, but also in box C/D and box C'/D' sRNAs. This Bacillus subtilis (strain 168) protein is RNA-binding protein YlxQ.